The chain runs to 113 residues: Cell division protein FtsB (113 aa).

The Cytoplasmic portion of the chain corresponds to 1–3 (MRL). The chain crosses the membrane as a helical span at residues 4–21 (ISLLLFVLLLAIQYPLWL). Topologically, residues 22-113 (GKGGWLRVWD…PNSVAGRGGH (92 aa)) are periplasmic. Residues 34 to 64 (RQVNEQTVHNQALKLRNAKLEGEVKDLQDGT) adopt a coiled-coil conformation. A disordered region spans residues 93-113 (KVSATPPLPPPPNSVAGRGGH).

The protein belongs to the FtsB family. As to quaternary structure, part of a complex composed of FtsB, FtsL and FtsQ.

Its subcellular location is the cell inner membrane. Essential cell division protein. May link together the upstream cell division proteins, which are predominantly cytoplasmic, with the downstream cell division proteins, which are predominantly periplasmic. The polypeptide is Cell division protein FtsB (Cupriavidus metallidurans (strain ATCC 43123 / DSM 2839 / NBRC 102507 / CH34) (Ralstonia metallidurans)).